The following is a 399-amino-acid chain: DJ-1 protein homolog F (399 aa).

2 PfpI endopeptidase domains span residues 7–199 (KSVL…ESLG) and 211–394 (TSLL…TALG).

The protein belongs to the peptidase C56 family. In terms of assembly, homotrimer.

May be involved in oxidative stress response. This is DJ-1 protein homolog F (DJ1F) from Arabidopsis thaliana (Mouse-ear cress).